Reading from the N-terminus, the 726-residue chain is WD repeat-containing and planar cell polarity effector protein fritz homolog (726 aa).

WD repeat units follow at residues 305–343 and 344–383; these read LRSK…TLLA and QAEL…INIQ. Residues 642-660 show a composition bias toward polar residues; it reads SSGSTPKHTIQQKIPNGPS. A disordered region spans residues 642 to 717; it reads SSGSTPKHTI…RRQDTEDVGS (76 aa). Acidic residues predominate over residues 672-685; it reads MEETEEEEEEEEEA. Positions 701 to 712 are enriched in basic and acidic residues; that stretch reads GELREDHRRQDT.

The protein belongs to the WD repeat fritz family. As to quaternary structure, component of the CPLANE (ciliogenesis and planar polarity effectors) complex, composed of INTU, FUZ and WDPCP. Interacts with CPLANE1.

It localises to the cell membrane. The protein resides in the cytoplasm. It is found in the cytoskeleton. Its subcellular location is the cilium axoneme. The protein localises to the cilium basal body. In terms of biological role, probable effector of the planar cell polarity signaling pathway which regulates the septin cytoskeleton in both ciliogenesis and collective cell movements. Together with FUZ and WDPCP proposed to function as core component of the CPLANE (ciliogenesis and planar polarity effectors) complex involved in the recruitment of peripheral IFT-A proteins to basal bodies. Binds phosphatidylinositol 3-phosphate with highest affinity, followed by phosphatidylinositol 4-phosphate and phosphatidylinositol 5-phosphate. This is WD repeat-containing and planar cell polarity effector protein fritz homolog (Wdpcp) from Rattus norvegicus (Rat).